The chain runs to 138 residues: Large ribosomal subunit protein uL16 (138 aa).

Residues 1–17 (MLIPRKVKHRKQHHPRQ) show a composition bias toward basic residues. The tract at residues 1-24 (MLIPRKVKHRKQHHPRQRGIASGG) is disordered.

This sequence belongs to the universal ribosomal protein uL16 family. In terms of assembly, part of the 50S ribosomal subunit.

Functionally, binds 23S rRNA and is also seen to make contacts with the A and possibly P site tRNAs. The polypeptide is Large ribosomal subunit protein uL16 (Mycobacterium ulcerans (strain Agy99)).